A 297-amino-acid chain; its full sequence is Small ribosomal subunit protein uS2 (297 aa).

The tract at residues glycine 266–tryptophan 297 is disordered. Low complexity predominate over residues alanine 282–tryptophan 297.

Belongs to the universal ribosomal protein uS2 family. Component of the small ribosomal subunit. Mature ribosomes consist of a small (40S) and a large (60S) subunit. The 40S subunit contains about 33 different proteins and 1 molecule of RNA (18S). The 60S subunit contains about 49 different proteins and 3 molecules of RNA (25S, 5.8S and 5S). Interacts with rps21.

It localises to the cytoplasm. Its function is as follows. Required for the assembly and/or stability of the 40S ribosomal subunit. Required for the processing of the 20S rRNA-precursor to mature 18S rRNA in a late step of the maturation of 40S ribosomal subunits. The polypeptide is Small ribosomal subunit protein uS2 (rps0) (Sclerotinia sclerotiorum (strain ATCC 18683 / 1980 / Ss-1) (White mold)).